The sequence spans 402 residues: Sulfate adenylyltransferase (402 aa).

This sequence belongs to the sulfate adenylyltransferase family.

The catalysed reaction is sulfate + ATP + H(+) = adenosine 5'-phosphosulfate + diphosphate. The protein operates within sulfur metabolism; hydrogen sulfide biosynthesis; sulfite from sulfate: step 1/3. This is Sulfate adenylyltransferase from Vesicomyosocius okutanii subsp. Calyptogena okutanii (strain HA).